Here is a 432-residue protein sequence, read N- to C-terminus: Enolase (432 aa).

Position 163 (glutamine 163) interacts with (2R)-2-phosphoglycerate. Glutamate 205 functions as the Proton donor in the catalytic mechanism. Mg(2+) is bound by residues aspartate 242, glutamate 285, and aspartate 312. (2R)-2-phosphoglycerate contacts are provided by lysine 337, arginine 366, serine 367, and lysine 388. Lysine 337 serves as the catalytic Proton acceptor.

Belongs to the enolase family. Requires Mg(2+) as cofactor.

The protein resides in the cytoplasm. The protein localises to the secreted. It is found in the cell surface. The enzyme catalyses (2R)-2-phosphoglycerate = phosphoenolpyruvate + H2O. Its pathway is carbohydrate degradation; glycolysis; pyruvate from D-glyceraldehyde 3-phosphate: step 4/5. Catalyzes the reversible conversion of 2-phosphoglycerate (2-PG) into phosphoenolpyruvate (PEP). It is essential for the degradation of carbohydrates via glycolysis. This Desulfovibrio desulfuricans (strain ATCC 27774 / DSM 6949 / MB) protein is Enolase.